The sequence spans 192 residues: uncharacterized protein (192 aa).

Its subcellular location is the virion. This is an uncharacterized protein from Acanthamoeba polyphaga mimivirus (APMV).